The sequence spans 286 residues: Protein GrpE (286 aa).

Disordered stretches follow at residues 1-51 and 260-286; these read MSED…ETTA and VAAP…QPTT. Composition is skewed to low complexity over residues 39–50 and 271–286; these read QPSSTPQTPETT and TEST…QPTT.

It belongs to the GrpE family. As to quaternary structure, homodimer.

The protein localises to the cytoplasm. Participates actively in the response to hyperosmotic and heat shock by preventing the aggregation of stress-denatured proteins, in association with DnaK and GrpE. It is the nucleotide exchange factor for DnaK and may function as a thermosensor. Unfolded proteins bind initially to DnaJ; upon interaction with the DnaJ-bound protein, DnaK hydrolyzes its bound ATP, resulting in the formation of a stable complex. GrpE releases ADP from DnaK; ATP binding to DnaK triggers the release of the substrate protein, thus completing the reaction cycle. Several rounds of ATP-dependent interactions between DnaJ, DnaK and GrpE are required for fully efficient folding. The sequence is that of Protein GrpE from Gloeothece citriformis (strain PCC 7424) (Cyanothece sp. (strain PCC 7424)).